We begin with the raw amino-acid sequence, 360 residues long: Protein Wnt-2 (360 aa).

The signal sequence occupies residues 1–26 (MNSSSLFGIWLSVPLILSWVTPQVSS). 11 disulfide bridges follow: Cys-76-Cys-87, Cys-127-Cys-135, Cys-137-Cys-157, Cys-206-Cys-220, Cys-208-Cys-215, Cys-278-Cys-309, Cys-294-Cys-304, Cys-308-Cys-348, Cys-324-Cys-339, Cys-326-Cys-336, and Cys-331-Cys-332. The O-palmitoleoyl serine; by PORCN moiety is linked to residue Ser-212. Asn-295 carries N-linked (GlcNAc...) asparagine glycosylation.

The protein belongs to the Wnt family. Post-translationally, palmitoleoylation is required for efficient binding to frizzled receptors. Depalmitoleoylation leads to Wnt signaling pathway inhibition.

The protein localises to the secreted. It is found in the extracellular space. Its subcellular location is the extracellular matrix. Ligand for members of the frizzled family of seven transmembrane receptors. Functions in the canonical Wnt signaling pathway that results in activation of transcription factors of the TCF/LEF family. Functions as a upstream regulator of FGF10 expression. Plays an important role in embryonic lung development. May contribute to embryonic brain development by regulating the proliferation of dopaminergic precursors and neurons. This chain is Protein Wnt-2 (WNT2), found in Monodelphis domestica (Gray short-tailed opossum).